Reading from the N-terminus, the 602-residue chain is Oligoendopeptidase F, chromosomal (602 aa).

H388 contributes to the Zn(2+) binding site. E389 is a catalytic residue. H392 and H395 together coordinate Zn(2+).

This sequence belongs to the peptidase M3B family. It depends on Zn(2+) as a cofactor.

Functionally, hydrolyzes peptides containing between 7 and 17 amino acids with a rather wide specificity. The chain is Oligoendopeptidase F, chromosomal (pepF2) from Lactococcus lactis subsp. cremoris (Streptococcus cremoris).